The sequence spans 260 residues: 5'-nucleotidase SurE (260 aa).

4 residues coordinate a divalent metal cation: Asp8, Asp9, Ser43, and Asn96.

It belongs to the SurE nucleotidase family. A divalent metal cation serves as cofactor.

The protein resides in the cytoplasm. It carries out the reaction a ribonucleoside 5'-phosphate + H2O = a ribonucleoside + phosphate. Its function is as follows. Nucleotidase that shows phosphatase activity on nucleoside 5'-monophosphates. The sequence is that of 5'-nucleotidase SurE from Ruegeria sp. (strain TM1040) (Silicibacter sp.).